Reading from the N-terminus, the 626-residue chain is Phosphoenolpyruvate carboxykinase (ATP) 2 (626 aa).

2 disordered regions span residues 1 to 23 (MASP…APVN) and 64 to 86 (PNLV…KHQQ). 324-331 (GLSGTGKT) contacts ATP.

The protein belongs to the phosphoenolpyruvate carboxykinase (ATP) family. In terms of assembly, homohexamer.

It is found in the cytoplasm. It catalyses the reaction oxaloacetate + ATP = phosphoenolpyruvate + ADP + CO2. It participates in carbohydrate biosynthesis; gluconeogenesis. The sequence is that of Phosphoenolpyruvate carboxykinase (ATP) 2 (PCK2) from Urochloa panicoides (Panic liverseed grass).